A 106-amino-acid polypeptide reads, in one-letter code: MLILSSRYAMKRDVLIIVIFTVLVLIIISRSSSIQAGRFMTTGRNRNLSVARSLYYKNHHKVVITEMSNFNKVRRRSSRFRRKTDGDEEEEEKRSIPTGPNPLHNK.

Residues 1-31 (MLILSSRYAMKRDVLIIVIFTVLVLIIISRS) form the signal peptide. N-linked (GlcNAc...) asparagine glycosylation is present at asparagine 47. A compositionally biased stretch (basic residues) spans 72–82 (KVRRRSSRFRR). The disordered stretch occupies residues 72-106 (KVRRRSSRFRRKTDGDEEEEEKRSIPTGPNPLHNK). 2 positions are modified to hydroxyproline: proline 97 and proline 100. A glycan (O-linked (Ara...) hydroxyproline) is linked at proline 100.

This sequence belongs to the CLV3/ESR signal peptide family. In terms of processing, the O-glycosylation (arabinosylation) of the hydroxyproline Pro-100 enhances binding affinity of the CLE21p peptide for its receptor. In terms of tissue distribution, mostly expressed in leaves and apex, and, to a lower extent, in seedlings, flowers, stems and siliques.

Its subcellular location is the secreted. It is found in the extracellular space. Extracellular signal peptide that regulates cell fate. Represses root apical meristem maintenance. Regulates the transition of protophloem cells from proliferation to differentiation, thus impinging on postembryonic growth capacity of the root meristem; this signaling pathway requires CRN and CLV2. The chain is CLAVATA3/ESR (CLE)-related protein 21 from Arabidopsis thaliana (Mouse-ear cress).